The primary structure comprises 179 residues: Large ribosomal subunit protein uL5 (179 aa).

Belongs to the universal ribosomal protein uL5 family. In terms of assembly, part of the 50S ribosomal subunit; part of the 5S rRNA/L5/L18/L25 subcomplex. Contacts the 5S rRNA and the P site tRNA. Forms a bridge to the 30S subunit in the 70S ribosome.

In terms of biological role, this is one of the proteins that bind and probably mediate the attachment of the 5S RNA into the large ribosomal subunit, where it forms part of the central protuberance. In the 70S ribosome it contacts protein S13 of the 30S subunit (bridge B1b), connecting the 2 subunits; this bridge is implicated in subunit movement. Contacts the P site tRNA; the 5S rRNA and some of its associated proteins might help stabilize positioning of ribosome-bound tRNAs. In Glaesserella parasuis serovar 5 (strain SH0165) (Haemophilus parasuis), this protein is Large ribosomal subunit protein uL5.